The chain runs to 1496 residues: DENN domain-containing protein 4B (1496 aa).

Residues 44-203 (AEPITDVAVI…AVYLCYKVGL (160 aa)) form the MABP domain. One can recognise a uDENN domain in the interval 195–369 (VYLCYKVGLA…NVPFPSPQRP (175 aa)). The region spanning 390-526 (PLPLSGASFL…PYKVLLATLT (137 aa)) is the cDENN domain. Residues 528–644 (LYQQLDQTYT…ECSFGSARHA (117 aa)) enclose the dDENN domain. Positions 720-744 (QPGALPVPGPSRSAPSSPAPRRTKQ) are disordered. Positions 729–739 (PSRSAPSSPAP) are enriched in low complexity. PPR repeat units follow at residues 775 to 811 (WFLC…VVLP) and 812 to 846 (DEVC…GIVP). Disordered regions lie at residues 891–970 (LRER…ARGA), 995–1055 (VPWH…TPRR), 1067–1119 (PSRH…GSEW), and 1205–1227 (SRPS…PVPG). Low complexity predominate over residues 896–912 (QQQQQQQQQQQQQQQEQ). Polar residues-rich tracts occupy residues 913–924 (VSAHQEAGSSQA) and 935–944 (RPLQRQTTWA). At serine 953 the chain carries Phosphoserine. Residues 1075-1090 (RIPPPELPPDLPPPAR) show a composition bias toward pro residues. Position 1092 is a phosphoserine (serine 1092). Over residues 1105–1119 (GSTASESSASLGSEW) the composition is skewed to low complexity.

It is found in the golgi apparatus. Its function is as follows. Guanine nucleotide exchange factor (GEF) which may activate RAB10. Promotes the exchange of GDP to GTP, converting inactive GDP-bound Rab proteins into their active GTP-bound form. The protein is DENN domain-containing protein 4B (DENND4B) of Homo sapiens (Human).